The primary structure comprises 234 residues: MKITWLGHSAFRIEIGKATILLDPFLSHNASFSGQDIKHVSAGVTHILLTHGHGDHVGDTVALAKETGAVVLANADLAAWLGSKGLDRLEMGNTGGTIALGSFSATFTNALHSSAQITEDGVSHALGNANGLMLHFEDEASILAMGDTDIFADMALINELHQPDIGLVPIGDRFTMGGAVAALACRRYFNFKTAIPCHFGTFPIIEQTADKFVAGMEGSKTDVKALKAAESLSI.

The protein belongs to the UPF0173 family.

This is UPF0173 metal-dependent hydrolase Rleg2_1519 from Rhizobium leguminosarum bv. trifolii (strain WSM2304).